An 88-amino-acid chain; its full sequence is Small ribosomal subunit protein uS17 (88 aa).

This sequence belongs to the universal ribosomal protein uS17 family. In terms of assembly, part of the 30S ribosomal subunit.

In terms of biological role, one of the primary rRNA binding proteins, it binds specifically to the 5'-end of 16S ribosomal RNA. In Pseudomonas aeruginosa (strain LESB58), this protein is Small ribosomal subunit protein uS17.